A 435-amino-acid chain; its full sequence is 3-ketoacyl-CoA thiolase (435 aa).

Cys98 (acyl-thioester intermediate) is an active-site residue. Active-site proton acceptor residues include His391 and Cys421.

It belongs to the thiolase-like superfamily. Thiolase family. As to quaternary structure, heterotetramer of two alpha chains (FadJ) and two beta chains (FadI).

It localises to the cytoplasm. It carries out the reaction an acyl-CoA + acetyl-CoA = a 3-oxoacyl-CoA + CoA. The protein operates within lipid metabolism; fatty acid beta-oxidation. Functionally, catalyzes the final step of fatty acid oxidation in which acetyl-CoA is released and the CoA ester of a fatty acid two carbons shorter is formed. The sequence is that of 3-ketoacyl-CoA thiolase from Vibrio cholerae serotype O1 (strain ATCC 39315 / El Tor Inaba N16961).